The chain runs to 599 residues: Elongation factor 4 (599 aa).

In terms of domain architecture, tr-type G spans 2–184 (KNIRNFSIIA…RLVRDIPPPE (183 aa)). Residues 14 to 19 (DHGKST) and 131 to 134 (NKID) each bind GTP.

This sequence belongs to the TRAFAC class translation factor GTPase superfamily. Classic translation factor GTPase family. LepA subfamily.

Its subcellular location is the cell inner membrane. It catalyses the reaction GTP + H2O = GDP + phosphate + H(+). Required for accurate and efficient protein synthesis under certain stress conditions. May act as a fidelity factor of the translation reaction, by catalyzing a one-codon backward translocation of tRNAs on improperly translocated ribosomes. Back-translocation proceeds from a post-translocation (POST) complex to a pre-translocation (PRE) complex, thus giving elongation factor G a second chance to translocate the tRNAs correctly. Binds to ribosomes in a GTP-dependent manner. This Shigella sonnei (strain Ss046) protein is Elongation factor 4.